The chain runs to 38 residues: Large ribosomal subunit protein bL36 (38 aa).

This sequence belongs to the bacterial ribosomal protein bL36 family.

This Cellvibrio japonicus (strain Ueda107) (Pseudomonas fluorescens subsp. cellulosa) protein is Large ribosomal subunit protein bL36.